A 429-amino-acid chain; its full sequence is Probable M18 family aminopeptidase 2 (429 aa).

H82, H156, and H401 together coordinate Zn(2+).

Belongs to the peptidase M18 family. Requires Zn(2+) as cofactor.

This Pseudomonas aeruginosa (strain UCBPP-PA14) protein is Probable M18 family aminopeptidase 2.